The following is a 277-amino-acid chain: Xyloglucan endotransglucosylase/hydrolase protein 19 (277 aa).

The first 21 residues, 1 to 21, serve as a signal peptide directing secretion; sequence MKSFTFLILFLFAAQSISVYA. The GH16 domain occupies 22–213; that stretch reads GSFHKDVKIH…WSKAPFTAYY (192 aa). E99 functions as the Nucleophile in the catalytic mechanism. E103 (proton donor) is an active-site residue. E103 contacts xyloglucan. N-linked (GlcNAc...) asparagine glycosylation occurs at N107. Xyloglucan contacts are provided by residues 116–118, 126–128, 192–193, and G197; these read HTN, DKE, and HW. 2 disulfides stabilise this stretch: C221–C230 and C262–C276. R267 provides a ligand contact to xyloglucan.

Belongs to the glycosyl hydrolase 16 family. XTH group 2 subfamily. Contains at least one intrachain disulfide bond essential for its enzymatic activity. In terms of tissue distribution, root specific.

It is found in the secreted. Its subcellular location is the cell wall. The protein localises to the extracellular space. It localises to the apoplast. The enzyme catalyses breaks a beta-(1-&gt;4) bond in the backbone of a xyloglucan and transfers the xyloglucanyl segment on to O-4 of the non-reducing terminal glucose residue of an acceptor, which can be a xyloglucan or an oligosaccharide of xyloglucan.. Functionally, possesses xyloglucan endotransglucosylase (XET) activity in vitro. Does not possess xyloglucan endohydrolysis (XEH) activity. Cleaves and religates xyloglucan polymers, an essential constituent of the primary cell wall, and thereby participates in cell wall construction of growing tissues. Involved in cell proliferation in the tissue reunion process of wounded inflorescence stems. Maybe a downstream target of NAC071 as a consequence of auxin action in wounded stems. This Arabidopsis thaliana (Mouse-ear cress) protein is Xyloglucan endotransglucosylase/hydrolase protein 19.